Consider the following 287-residue polypeptide: Tetraspanning orphan receptor (287 aa).

Residues 1–27 (MSPSLVSDTQKHERGSHGVKIKHFSPY) lie on the Extracellular side of the membrane. Residues 28–48 (IAVCVTTFSLAFCCFMVHGAI) form a helical membrane-spanning segment. Residues 49-55 (TRQPTHL) are Cytoplasmic-facing. Residues 56–76 (LPFFFIQVFDLIICLIHILGF) form a helical membrane-spanning segment. The Extracellular portion of the chain corresponds to 77–91 (MSSTSDIRLVIHTKT). Residues 92-114 (GPIYIKSTGLTFIILSISRMMLA) traverse the membrane as a helical segment. Residues 115 to 287 (FKAYCLGMVW…NASSNAHSSC (173 aa)) are Cytoplasmic-facing. The tract at residues 165–190 (NNSIGNSGSPNEPNTRPRPDTITYDP) is disordered.

Interacts (via N-terminal extracellular domain) with human C2a.

The protein resides in the cell membrane. Cell surface receptor that binds to human complement C2a protein. This results in inhibition of the classical and lectin pathways of complement activation, probably due to interference with binding of C2a to C4b and interference with cleavage by C1 or MASP2 such that C3 convertase cannot be formed. This infers resistance to complement-mediated cell lysis, allowing parasite survival and infection. The polypeptide is Tetraspanning orphan receptor (Trypanosoma cruzi).